We begin with the raw amino-acid sequence, 119 residues long: Dihydroneopterin aldolase (119 aa).

Substrate is bound by residues glutamate 21, tyrosine 53, and 72 to 73; that span reads VE. Lysine 98 serves as the catalytic Proton donor/acceptor.

The protein belongs to the DHNA family.

It carries out the reaction 7,8-dihydroneopterin = 6-hydroxymethyl-7,8-dihydropterin + glycolaldehyde. The protein operates within cofactor biosynthesis; tetrahydrofolate biosynthesis; 2-amino-4-hydroxy-6-hydroxymethyl-7,8-dihydropteridine diphosphate from 7,8-dihydroneopterin triphosphate: step 3/4. Catalyzes the conversion of 7,8-dihydroneopterin to 6-hydroxymethyl-7,8-dihydropterin. In Streptomyces coelicolor (strain ATCC BAA-471 / A3(2) / M145), this protein is Dihydroneopterin aldolase (folB).